Here is a 1728-residue protein sequence, read N- to C-terminus: U3 small nucleolar RNA-associated protein 10 (1728 aa).

HEAT repeat units follow at residues 540 to 578 (DKDFQAIIPYCAVALSDPAKKVRRAAADLIAVLGSLVKE), 881 to 926 (PANH…MMPA), 986 to 1024 (FMGSSEVIPPLIDTFRRRGRNVVASTKDLLASFVTAYEH), 1191 to 1229 (LLSIAEFIKSVEALLDRPNVGLRQKVLRALELRVDSEST), 1235 to 1274 (REALLAFLPQLTAVIRESDDMSYKHTAVTCVDKISEKYGK), 1622 to 1662 (ADAT…GQAA), and 1683 to 1721 (LQALPEMLPYISELQDDDDEVVERENRRWIVEIEEKLGE).

The protein belongs to the HEATR1/UTP10 family. As to quaternary structure, component of the ribosomal small subunit (SSU) processome.

The protein resides in the nucleus. It localises to the nucleolus. Functionally, involved in nucleolar processing of pre-18S ribosomal RNA. Involved in ribosome biosynthesis. The chain is U3 small nucleolar RNA-associated protein 10 from Chaetomium globosum (strain ATCC 6205 / CBS 148.51 / DSM 1962 / NBRC 6347 / NRRL 1970) (Soil fungus).